The primary structure comprises 463 residues: A-type ATP synthase subunit B (463 aa).

The protein belongs to the ATPase alpha/beta chains family. In terms of assembly, has multiple subunits with at least A(3), B(3), C, D, E, F, H, I and proteolipid K(x).

The protein localises to the cell membrane. Its function is as follows. Component of the A-type ATP synthase that produces ATP from ADP in the presence of a proton gradient across the membrane. The B chain is a regulatory subunit. The chain is A-type ATP synthase subunit B from Methanothermobacter thermautotrophicus (strain ATCC 29096 / DSM 1053 / JCM 10044 / NBRC 100330 / Delta H) (Methanobacterium thermoautotrophicum).